We begin with the raw amino-acid sequence, 299 residues long: Ribosomal RNA small subunit methyltransferase H (299 aa).

S-adenosyl-L-methionine contacts are provided by residues 32–34 (AGH), Asp-52, Phe-79, Asp-100, and Gln-107.

Belongs to the methyltransferase superfamily. RsmH family.

The protein resides in the cytoplasm. It catalyses the reaction cytidine(1402) in 16S rRNA + S-adenosyl-L-methionine = N(4)-methylcytidine(1402) in 16S rRNA + S-adenosyl-L-homocysteine + H(+). Its function is as follows. Specifically methylates the N4 position of cytidine in position 1402 (C1402) of 16S rRNA. In Mycoplasmopsis pulmonis (strain UAB CTIP) (Mycoplasma pulmonis), this protein is Ribosomal RNA small subunit methyltransferase H.